A 326-amino-acid polypeptide reads, in one-letter code: tRNA uridine(34) hydroxylase (326 aa).

The Rhodanese domain occupies 123-217 (ADPEVFVVDT…YLEEVPQEES (95 aa)). Cys177 functions as the Cysteine persulfide intermediate in the catalytic mechanism. Over residues 278-288 (QVERFREREKQ) the composition is skewed to basic and acidic residues. The tract at residues 278-326 (QVERFREREKQVSLANQRGEQHVGGESAKQRAQRREAKLAKKAAQRKQA) is disordered. Basic residues predominate over residues 317–326 (AKKAAQRKQA).

The protein belongs to the TrhO family.

It catalyses the reaction uridine(34) in tRNA + AH2 + O2 = 5-hydroxyuridine(34) in tRNA + A + H2O. Functionally, catalyzes oxygen-dependent 5-hydroxyuridine (ho5U) modification at position 34 in tRNAs. The polypeptide is tRNA uridine(34) hydroxylase (Vibrio parahaemolyticus serotype O3:K6 (strain RIMD 2210633)).